A 91-amino-acid chain; its full sequence is Small ribosomal subunit protein uS19 (91 aa).

The protein belongs to the universal ribosomal protein uS19 family.

Functionally, protein S19 forms a complex with S13 that binds strongly to the 16S ribosomal RNA. The protein is Small ribosomal subunit protein uS19 of Pseudomonas putida (strain ATCC 700007 / DSM 6899 / JCM 31910 / BCRC 17059 / LMG 24140 / F1).